The primary structure comprises 333 residues: 6-phosphogluconolactonase (333 aa).

It belongs to the cycloisomerase 2 family.

It catalyses the reaction 6-phospho-D-glucono-1,5-lactone + H2O = 6-phospho-D-gluconate + H(+). It functions in the pathway carbohydrate degradation; pentose phosphate pathway; D-ribulose 5-phosphate from D-glucose 6-phosphate (oxidative stage): step 2/3. Catalyzes the hydrolysis of 6-phosphogluconolactone to 6-phosphogluconate. In Yersinia enterocolitica serotype O:8 / biotype 1B (strain NCTC 13174 / 8081), this protein is 6-phosphogluconolactonase.